We begin with the raw amino-acid sequence, 320 residues long: uncharacterized protein (320 aa).

The N-terminal stretch at 1–23 (MKLNLRFPSYFLPVVAASAFLVS) is a signal peptide. Cysteine 24 is lipidated: N-palmitoyl cysteine. The S-diacylglycerol cysteine moiety is linked to residue cysteine 24. The tract at residues 160-181 (KNHEHGHTHKNGETHEHDHDHH) is disordered.

It localises to the cell membrane. This is an uncharacterized protein from Mycoplasma pneumoniae (strain ATCC 29342 / M129 / Subtype 1) (Mycoplasmoides pneumoniae).